The primary structure comprises 926 residues: Armadillo repeat-containing protein 5 (926 aa).

The segment covering 82-104 (PAPSQAASGSAPSSVASAGSTPG) has biased composition (low complexity). The segment at 82–111 (PAPSQAASGSAPSSVASAGSTPGHAPAAES) is disordered. 7 ARM repeats span residues 139–179 (GACR…NLAM), 181–221 (PESC…NLAD), 223–263 (PQHR…ELSR), 267–306 (RACA…NLCA), 307–354 (QGLV…LCRE), 355–399 (AINR…DTGA), and 401–440 (GKLQ…EERT). Position 337 is a phosphoserine (S337). Positions 472–516 (WSPERCPMPEPSESVSPTPGQTSMSTPRTLRKPGRIPAATPEEPW) are disordered. Residues 484-499 (ESVSPTPGQTSMSTPR) are compositionally biased toward polar residues. The BTB domain maps to 745–813 (PDLHFVLDSG…LHGCRGCGAA (69 aa)).

Substrate-recognition component of the BCR(ARMC5) E3 ubiquitin ligase complex, at least composed of CUL3, ARMC5 and RBX1. Post-translationally, ubiquitinated by a BCR (BTB-CUL3-RBX1) E3 ubiquitin ligase complex, leading to its degradation. Deubiquitinated by USP7. Expression is high in the thymus, stomach, bone marrow and lymphatic tissues (including lymph nodes and intestinal wall). Also expressed in the adrenal gland, skin and in brain structures, with noticeable levels found in the cerebellum.

It localises to the nucleus. Its subcellular location is the chromosome. The protein localises to the cytoplasm. It participates in protein modification; protein ubiquitination. Its function is as follows. Substrate-recognition component of a BCR (BTB-CUL3-RBX1) E3 ubiquitin ligase complex that terminates RNA polymerase II (Pol II) transcription in the promoter-proximal region of genes. The BCR(ARMC5) complex provides a quality checkpoint during transcription elongation by driving premature transcription termination of transcripts that are unfavorably configured for transcriptional elongation: the BCR(ARMC5) complex acts by mediating ubiquitination of Pol II subunit POLR2A phosphorylated at 'Ser-5' of the C-terminal domain (CTD), leading to POLR2A degradation. The BCR(ARMC5) complex acts in parallel of the integrator complex and is specific for RNA Pol II originating from the promoter-proximal zone: it does not ubiquitinate elongation-stalled RNA Pol II. The BCR(ARMC5) complex also acts as a regulator of fatty acid desaturation by mediating ubiquitination and degradation of SCAP-free SREBF1 and SREBF2. Involved in fetal development, T-cell function and adrenal gland growth homeostasis. Plays a role in steroidogenesis, modulates steroidogenic enzymes expression and cortisol production. The sequence is that of Armadillo repeat-containing protein 5 from Mus musculus (Mouse).